A 155-amino-acid chain; its full sequence is Lipoprotein signal peptidase (155 aa).

Helical transmembrane passes span 7–27, 39–59, 63–83, and 96–116; these read WFWI…YITV, IIPG…FSAF, VGWL…FAYF, and GFIL…GYVV. Residues Asp-117 and Asp-133 contribute to the active site. A helical membrane pass occupies residues 126–146; it reads FPVFNLADVFINIGIICLLIS.

The protein belongs to the peptidase A8 family.

The protein localises to the cell inner membrane. The enzyme catalyses Release of signal peptides from bacterial membrane prolipoproteins. Hydrolyzes -Xaa-Yaa-Zaa-|-(S,diacylglyceryl)Cys-, in which Xaa is hydrophobic (preferably Leu), and Yaa (Ala or Ser) and Zaa (Gly or Ala) have small, neutral side chains.. It participates in protein modification; lipoprotein biosynthesis (signal peptide cleavage). This protein specifically catalyzes the removal of signal peptides from prolipoproteins. In Microcystis aeruginosa (strain NIES-843 / IAM M-2473), this protein is Lipoprotein signal peptidase.